Here is a 433-residue protein sequence, read N- to C-terminus: Homogentisate 1,2-dioxygenase (433 aa).

H288 serves as the catalytic Proton acceptor. The Fe cation site is built by H331 and E337. 2 residues coordinate homogentisate: Y346 and H367. Fe cation is bound at residue H367.

Belongs to the homogentisate dioxygenase family. In terms of assembly, hexamer; dimer of trimers. Requires Fe cation as cofactor.

The catalysed reaction is homogentisate + O2 = 4-maleylacetoacetate + H(+). It participates in amino-acid degradation; L-phenylalanine degradation; acetoacetate and fumarate from L-phenylalanine: step 4/6. Functionally, involved in the catabolism of homogentisate (2,5-dihydroxyphenylacetate or 2,5-OH-PhAc), a central intermediate in the degradation of phenylalanine and tyrosine. Catalyzes the oxidative ring cleavage of the aromatic ring of homogentisate to yield maleylacetoacetate. In Pseudomonas entomophila (strain L48), this protein is Homogentisate 1,2-dioxygenase.